An 88-amino-acid polypeptide reads, in one-letter code: Small ribosomal subunit protein bS20 (88 aa).

Positions 1-20 (MANTAQARKRARQAVVQNAH) are disordered.

The protein belongs to the bacterial ribosomal protein bS20 family.

Functionally, binds directly to 16S ribosomal RNA. This Ralstonia pickettii (strain 12J) protein is Small ribosomal subunit protein bS20.